The chain runs to 304 residues: ATP synthase gamma chain (304 aa).

Belongs to the ATPase gamma chain family. F-type ATPases have 2 components, CF(1) - the catalytic core - and CF(0) - the membrane proton channel. CF(1) has five subunits: alpha(3), beta(3), gamma(1), delta(1), epsilon(1). CF(0) has three main subunits: a, b and c.

Its subcellular location is the cell membrane. In terms of biological role, produces ATP from ADP in the presence of a proton gradient across the membrane. The gamma chain is believed to be important in regulating ATPase activity and the flow of protons through the CF(0) complex. The protein is ATP synthase gamma chain of Mycobacterium marinum (strain ATCC BAA-535 / M).